Reading from the N-terminus, the 584-residue chain is Vesicular glutamate transporter 2.1 (584 aa).

Residues 1–70 (METPREPAGF…CTCFGLPRRY (70 aa)) are Cytoplasmic-facing. A helical transmembrane segment spans residues 71–91 (IIAIMSGLGFCISFGIRCNLG). Topologically, residues 92–124 (VAIVSMVNNSTIHLNGKIIIKEKAKFNWDPETV) are vesicular. Asparagine 99 and asparagine 100 each carry an N-linked (GlcNAc...) asparagine glycan. A helical membrane pass occupies residues 125–145 (GLIHGSFFWGYIVTQIPGGYI). Topologically, residues 146–148 (SSR) are cytoplasmic. Residues 149-169 (LAANRVFGAAILLTSTLNMFI) traverse the membrane as a helical segment. Over 170-177 (PSAARGHY) the chain is Vesicular. The chain crosses the membrane as a helical span at residues 178-198 (GCVIFVRILQGLVEGVTYPAC). Residues 199 to 216 (HGIWSKWAPPLERSRLAT) lie on the Cytoplasmic side of the membrane. A helical transmembrane segment spans residues 217-237 (TSFCGSYAGAVIAMPLAGILV). Topologically, residues 238 to 244 (QYTGWSS) are vesicular. Residues 245-265 (VFYVYGCFGIFWYMFWILVSY) form a helical membrane-spanning segment. Topologically, residues 266 to 310 (ESPAEHPTITAEERCYIEESIGESAKLLGPADKFKTPWRKFFTSM) are cytoplasmic. A helical transmembrane segment spans residues 311-331 (PVYAIIVANFCRSWTFYLLLI). The Vesicular portion of the chain corresponds to 332 to 349 (SQPAYFEEVFGFEISKVG). Residues 350 to 370 (MLSALPHLVMTIIVPIGGQLA) traverse the membrane as a helical segment. The Cytoplasmic segment spans residues 371 to 386 (DHLRSKNILSTTTVRK). Residues 387–407 (IMNCGGFGMEATLLLIVGYSH) form a helical membrane-spanning segment. At 408-409 (SK) the chain is on the vesicular side. The helical transmembrane segment at 410–430 (GVAISFLVLAVGFSGFAISGF) threads the bilayer. Topologically, residues 431–445 (NVNHLDIAPRYASIL) are cytoplasmic. A helical transmembrane segment spans residues 446–466 (MGISNGVGTLSGMVCPLIVGA). At 467–477 (MTKHKTREEWQ) the chain is on the vesicular side. A helical membrane pass occupies residues 478 to 498 (YVFLIASLVHYGGVIFYGIFA). The Cytoplasmic portion of the chain corresponds to 499–584 (SGEKQPWADP…YGYRQGGNYS (86 aa)).

It belongs to the major facilitator superfamily. Sodium/anion cotransporter family. VGLUT subfamily. As to expression, expressed in spinal cord and retinal ganglion cells.

It is found in the cytoplasmic vesicle. Its subcellular location is the secretory vesicle. The protein resides in the synaptic vesicle membrane. The protein localises to the membrane. It localises to the synapse. It is found in the synaptosome. Its subcellular location is the cell membrane. It catalyses the reaction L-glutamate(out) = L-glutamate(in). The catalysed reaction is 3 Na(+)(out) + phosphate(out) = 3 Na(+)(in) + phosphate(in). It carries out the reaction phosphate(in) = phosphate(out). The enzyme catalyses K(+)(in) + H(+)(out) = K(+)(out) + H(+)(in). It catalyses the reaction chloride(in) = chloride(out). Chloride channel activity is allosterically activated by lumenal H(+) and Cl(-) leading to synaptic vesicles acidification. The L-glutamate transport activity is allosterically activated by lumenal H(+) and Cl(-). The allosteric requirement for H(+) efficiently prevents non-vesicular efflux across the plasma membrane. The L-glutamate uniporter activity exhibits a biphasic dependence on chloride concentration. Its function is as follows. Multifunctional transporter that transports L-glutamate as well as multiple ions such as chloride, proton, potassium, sodium and phosphate. At the synaptic vesicle membrane, mainly functions as a uniporter which transports preferentially L-glutamate but also, phosphate from the cytoplasm into synaptic vesicles at presynaptic nerve terminals of excitatory neural cells. The L-glutamate or phosphate uniporter activity is electrogenic and is driven by the proton electrochemical gradient, mainly by the electrical gradient established by the vacuolar H(+)-ATPase across the synaptic vesicle membrane. In addition, functions as a chloride channel that allows a chloride permeation through the synaptic vesicle membrane therefore affects the proton electrochemical gradient and promotes synaptic vesicles acidification. Moreover, functions as a vesicular K(+)/H(+) antiport allowing to maintain the electrical gradient and to decrease chemical gradient and therefore sustain vesicular L-glutamate uptake. The vesicular H(+)/H(+) antiport activity is electroneutral. At the plasma membrane, following exocytosis, functions as a symporter of Na(+) and phosphate from the extracellular space to the cytoplasm allowing synaptic phosphate homeostasis regulation. The symporter activity is driven by an inside negative membrane potential and is electrogenic. Also involved in the regulation of retinal hyaloid vessel regression during postnatal development. May also play a role in the endocrine L-glutamatergic system of other tissues such as pineal gland and pancreas. Required for glutamate release by retinotectal synapses and visual acuity. This is Vesicular glutamate transporter 2.1 (slc17a6b) from Danio rerio (Zebrafish).